Reading from the N-terminus, the 616-residue chain is Hemagglutinin-neuraminidase (616 aa).

Residues 1 to 26 (MDRAVSQVALENDEREAKNTWRLVFR) are Intravirion-facing. A helical membrane pass occupies residues 27–47 (IAILLSTVVTLAISAAALAYS). Over 48–616 (MEASTPSDLV…ELESYAASWP (569 aa)) the chain is Virion surface. Asn119 carries N-linked (GlcNAc...) asparagine; by host glycosylation. Residues 124–152 (GAPIHDPDYIGGIGKELIVDDASDVTSYY) are important for interaction with fusion/F protein. Disulfide bonds link Cys172-Cys196, Cys186-Cys247, and Cys238-Cys251. The involved in neuraminidase activity stretch occupies residues 234 to 239 (NRKSCS). 2 N-linked (GlcNAc...) asparagine; by host glycosylation sites follow: Asn341 and Asn433. Intrachain disulfides connect Cys344/Cys461 and Cys455/Cys465. N-linked (GlcNAc...) asparagine; by host glycosylation is found at Asn481, Asn538, and Asn600. Cysteines 531 and 542 form a disulfide.

It belongs to the paramyxoviruses hemagglutinin-neuraminidase family. Homotetramer; composed of disulfide-linked homodimers. Interacts with F protein trimer. Interacts with host CG-1B; this interaction inhibits viral adsorption and replication rather than internalization.

The protein localises to the virion membrane. It is found in the host cell membrane. It carries out the reaction Hydrolysis of alpha-(2-&gt;3)-, alpha-(2-&gt;6)-, alpha-(2-&gt;8)- glycosidic linkages of terminal sialic acid residues in oligosaccharides, glycoproteins, glycolipids, colominic acid and synthetic substrates.. Its function is as follows. Mediates the viral entry into the host cell together with fusion/F protein. Attaches the virus to sialic acid-containing cell receptors and thereby initiates infection. Binding of HN protein to the receptor induces a conformational change that allows the F protein to trigger virion/cell membranes fusion. In terms of biological role, neuraminidase activity ensures the efficient spread of the virus by dissociating the mature virions from the neuraminic acid containing glycoproteins. This chain is Hemagglutinin-neuraminidase (HN), found in Newcastle disease virus (strain Queensland/66) (NDV).